The primary structure comprises 473 residues: H(+)/Cl(-) exchange transporter ClcA (473 aa).

At 1–32 (MKTDTPSLETPQAARLRRRQLIRQLLERDKTP) the chain is on the cytoplasmic side. The chain crosses the membrane as a helical span at residues 33–69 (LAILFMAAVVGTLVGLAAVAFDKGVAWLQNQRMGALV). Over 70–76 (HTADNYP) the chain is Periplasmic. The helical transmembrane segment at 77–100 (LLLTVAFLCSAVLAMFGYFLVRKY) threads the bilayer. The short motif at 106–110 (GSGIP) is the Selectivity filter part_1 element. Ser107 is a binding site for chloride. Positions 109 to 116 (IPEIEGAL) form an intramembrane region, helical. At 117 to 123 (EDQRPVR) the chain is on the cytoplasmic side. Transmembrane regions (helical) follow at residues 124–141 (WWRV…TLGG) and 148–166 (EGPT…LDVF). The Selectivity filter part_2 signature appears at 146 to 150 (GREGP). Residues 167 to 176 (RLKGDEARHT) lie on the Cytoplasmic side of the membrane. 2 consecutive intramembrane regions (helical) follow at residues 177–189 (LLAT…LAAA) and 193–201 (PLAGILFII). At 202–214 (EEMRPQFRYTLIS) the chain is on the cytoplasmic side. Residues 215 to 232 (IKAVFIGVIMSTIMYRIF) traverse the membrane as a helical segment. Over 233–252 (NHEVALIDVGKLSDAPLNTL) the chain is Periplasmic. Residues 253-281 (WLYLILGIIFGIFGPIFNKWVLGMQDLLH) form a helical membrane-spanning segment. At 282–287 (RVHGGN) the chain is on the cytoplasmic side. Residues 288–309 (ITKWVLMGGAIGGLCGLLGFVA) form a helical membrane-spanning segment. Topologically, residues 310-329 (PATSGGGFNLIPIATAGNFS) are periplasmic. Transmembrane regions (helical) follow at residues 330–349 (MGML…LCFS) and 355–376 (GIFA…MVAV). The Selectivity filter part_3 motif lies at 355–359 (GIFAP). Ile356 and Phe357 together coordinate chloride. Topologically, residues 377 to 386 (ELFPQYHLEA) are periplasmic. The segment at residues 387–401 (GTFAIAGMGALLAAS) is an intramembrane region (helical). The segment at residues 402–404 (IRA) is an intramembrane region (note=Loop between two helices). The segment at residues 405 to 416 (PLTGIILVLEMT) is an intramembrane region (helical). An intramembrane region (note=Loop between two helices) is located at residues 417 to 421 (DNYQL). A helical membrane pass occupies residues 422-438 (ILPMIITGLGATLLAQF). Residues 439–473 (TGGKPLYSAILARTLAKQEAEQLARSKAASARENT) lie on the Cytoplasmic side of the membrane. Tyr445 serves as a coordination point for chloride.

It belongs to the chloride channel (TC 2.A.49) family. ClcA subfamily. In terms of assembly, homodimer.

It is found in the cell inner membrane. The catalysed reaction is 2 chloride(in) + H(+)(out) = 2 chloride(out) + H(+)(in). Functionally, proton-coupled chloride transporter. Functions as antiport system and exchanges two chloride ions for 1 proton. Probably acts as an electrical shunt for an outwardly-directed proton pump that is linked to amino acid decarboxylation, as part of the extreme acid resistance (XAR) response. This chain is H(+)/Cl(-) exchange transporter ClcA, found in Escherichia coli O45:K1 (strain S88 / ExPEC).